Consider the following 252-residue polypeptide: Aspartate/glutamate leucyltransferase (252 aa).

The protein belongs to the R-transferase family. Bpt subfamily.

The protein localises to the cytoplasm. The catalysed reaction is N-terminal L-glutamyl-[protein] + L-leucyl-tRNA(Leu) = N-terminal L-leucyl-L-glutamyl-[protein] + tRNA(Leu) + H(+). It carries out the reaction N-terminal L-aspartyl-[protein] + L-leucyl-tRNA(Leu) = N-terminal L-leucyl-L-aspartyl-[protein] + tRNA(Leu) + H(+). In terms of biological role, functions in the N-end rule pathway of protein degradation where it conjugates Leu from its aminoacyl-tRNA to the N-termini of proteins containing an N-terminal aspartate or glutamate. The protein is Aspartate/glutamate leucyltransferase of Afipia carboxidovorans (strain ATCC 49405 / DSM 1227 / KCTC 32145 / OM5) (Oligotropha carboxidovorans).